We begin with the raw amino-acid sequence, 104 residues long: L-rhamnose mutarotase (104 aa).

Residue Tyr18 participates in substrate binding. Catalysis depends on His22, which acts as the Proton donor. Residues Tyr41 and 76-77 (WW) each bind substrate.

Belongs to the rhamnose mutarotase family. As to quaternary structure, homodimer.

It localises to the cytoplasm. It carries out the reaction alpha-L-rhamnose = beta-L-rhamnose. It functions in the pathway carbohydrate metabolism; L-rhamnose metabolism. Involved in the anomeric conversion of L-rhamnose. In Bacteroides thetaiotaomicron (strain ATCC 29148 / DSM 2079 / JCM 5827 / CCUG 10774 / NCTC 10582 / VPI-5482 / E50), this protein is L-rhamnose mutarotase.